A 285-amino-acid polypeptide reads, in one-letter code: uncharacterized protein (285 aa).

7 consecutive transmembrane segments (helical) span residues 6 to 26, 38 to 58, 84 to 104, 110 to 130, 153 to 173, 176 to 196, and 236 to 256; these read YLVV…TPLI, VFAA…YIFP, IFLL…IFLR, GVLA…ELIF, FMMH…DDGF, ISFF…ALMV, and LIFG…TVLV.

The protein localises to the cell membrane. This is an uncharacterized protein from Mycoplasma pneumoniae (strain ATCC 29342 / M129 / Subtype 1) (Mycoplasmoides pneumoniae).